The following is a 236-amino-acid chain: Probable transcriptional regulatory protein FP0835 (236 aa).

The protein belongs to the TACO1 family.

The protein resides in the cytoplasm. The protein is Probable transcriptional regulatory protein FP0835 of Flavobacterium psychrophilum (strain ATCC 49511 / DSM 21280 / CIP 103535 / JIP02/86).